The primary structure comprises 491 residues: Glucose-6-phosphate exchanger SLC37A2 (491 aa).

Residues 5–25 (LAPGIWYRAFILLITFLIYTC) traverse the membrane as a helical segment. N-linked (GlcNAc...) asparagine glycosylation is found at asparagine 43, asparagine 52, and asparagine 58. The next 5 helical transmembrane spans lie at 78-98 (GAVD…SGIF), 108-130 (LTAG…FWNI), 132-154 (VLWY…WPAV), 169-189 (LIMG…SLLA), and 200-220 (SFVV…FFLI). The interval 229-257 (SPPQHHGNPEESQDQPEDPANGPSCNKES) is disordered. Transmembrane regions (helical) follow at residues 292 to 312 (LCLL…PLYI), 328 to 348 (TLFD…SDYI), 352 to 372 (ATTC…YNHV), 377 to 397 (IGIS…PYAL), 424 to 444 (AIID…AGLI), and 452 to 472 (VFYM…RLVY).

It belongs to the major facilitator superfamily. Organophosphate:Pi antiporter (OPA) (TC 2.A.1.4) family.

It localises to the endoplasmic reticulum membrane. The catalysed reaction is D-glucose 6-phosphate(in) + phosphate(out) = D-glucose 6-phosphate(out) + phosphate(in). Its activity is regulated as follows. Inhibited by vanadate but not by chlorogenic acid. In terms of biological role, inorganic phosphate and glucose-6-phosphate antiporter. May transport cytoplasmic glucose-6-phosphate into the lumen of the endoplasmic reticulum and translocate inorganic phosphate into the opposite direction. Independent of a lumenal glucose-6-phosphatase. May not play a role in homeostatic regulation of blood glucose levels. The sequence is that of Glucose-6-phosphate exchanger SLC37A2 from Bos taurus (Bovine).